The sequence spans 111 residues: MASLLYFILFLLFVCISYYFTYYPTNKLQAAVMETDRENAIIIQRNDEIPTRTLDTAIFTDASTVASAQIYLYYNSNIGKIIMSLNGKKHTFNLYDDNDIRTLLPILLLSK.

Residues 1 to 21 (MASLLYFILFLLFVCISYYFT) form a helical; Signal-anchor membrane-spanning segment. Over 22-111 (YYPTNKLQAA…TLLPILLLSK (90 aa)) the chain is Virion surface.

It belongs to the orthopoxvirus OPG086 family. In terms of assembly, interacts with OPG099/L5. Component of the entry fusion complex (EFC) composed of OPG053, OPG076, OPG086, OPG094, OPG095, OPG099, OPG107, OPG143, OPG104, OPG147 and OPG155. Except for OPG095 and OPG053, each of the EFC proteins is required for assembly or stability of the complex. Unglycosylated because produced in viral factories instead of the classic ER -Golgi route.

Its subcellular location is the virion membrane. In terms of biological role, component of the entry fusion complex (EFC), which consists of 11 proteins. During cell infection, this complex mediates entry of the virion core into the host cytoplasm by a two-step mechanism consisting of lipid mixing of the viral and cellular membranes and subsequent pore formation. The protein is Entry-fusion complex protein OPG086 (OPG086) of Variola virus (isolate Human/India/Ind3/1967) (VARV).